A 1065-amino-acid chain; its full sequence is Exportin-T (1065 aa).

This sequence belongs to the exportin family.

It is found in the nucleus. The protein localises to the cytoplasm. Functionally, tRNA nucleus export receptor which facilitates tRNA translocation across the nuclear pore complex. Involved in pre-tRNA splicing, probably by affecting the interaction of pre-tRNA with splicing endonuclease. The chain is Exportin-T (LOS1) from Coprinopsis cinerea (strain Okayama-7 / 130 / ATCC MYA-4618 / FGSC 9003) (Inky cap fungus).